Here is a 366-residue protein sequence, read N- to C-terminus: Glycerol-3-phosphate dehydrogenase [NAD(+)], glycosomal (366 aa).

Residues 22–27, F97, K125, and A157 contribute to the NAD(+) site; that span reads GSGAFG. K125 contributes to the substrate binding site. The active-site Proton acceptor is K210. Residues R274, V298, and E300 each coordinate NAD(+). Position 274 to 275 (274 to 275) interacts with substrate; that stretch reads RN. Residues 364–366 carry the Microbody targeting signal motif; sequence SKL.

Belongs to the NAD-dependent glycerol-3-phosphate dehydrogenase family. As to quaternary structure, homodimer.

The protein localises to the glycosome. The catalysed reaction is sn-glycerol 3-phosphate + NAD(+) = dihydroxyacetone phosphate + NADH + H(+). The protein is Glycerol-3-phosphate dehydrogenase [NAD(+)], glycosomal (GPD) of Leishmania mexicana.